The following is a 204-amino-acid chain: Arginine exporter protein ArgO (204 aa).

The next 6 helical transmembrane spans lie at 1-21 (MWAVYLQGVLLGAAMILPLGP), 37-57 (LMVALLCAVSDMVLISAGIFG), 67-87 (LLLGAVTCGGVAFLLWFGWGA), 111-131 (IIATMLAVTWLNPHVYLDTFV), 154-174 (TASFTWFFALALLAAWLAPWL), and 179-199 (VQRVINFFVGMVMWGIALQLA).

Belongs to the LysE/ArgO transporter (TC 2.A.75) family.

Its subcellular location is the cell inner membrane. It carries out the reaction L-arginine(in) = L-arginine(out). Involved in the export of arginine. Important to control the intracellular level of arginine and the correct balance between arginine and lysine. The polypeptide is Arginine exporter protein ArgO (Pectobacterium atrosepticum (strain SCRI 1043 / ATCC BAA-672) (Erwinia carotovora subsp. atroseptica)).